The following is a 213-amino-acid chain: MQPYQRDFIRFAIDRGVLRFGEFTLKSGRTSPYFFNAGLFNTGSALAELGRCYAAAIVDSKIPFDVLFGPAYKGIPLAATTAVALADQHQLDVPWCFNRKEAKDHGEGGSLVGAPLAGDVLIIDDVITAGTAIREVMQIINAQQAKAAGVLIALNREERGNGELSAIQEVERDFGIPVVSIVSLTQVLEFLADDPQLKQHLPAVEAYRAQYGI.

K26 is a binding site for 5-phospho-alpha-D-ribose 1-diphosphate. 34–35 (FF) contributes to the orotate binding site. Residues 72–73 (YK), R99, K100, K103, H105, and 124–132 (DDVITAGTA) contribute to the 5-phospho-alpha-D-ribose 1-diphosphate site. Orotate contacts are provided by T128 and R156.

It belongs to the purine/pyrimidine phosphoribosyltransferase family. PyrE subfamily. In terms of assembly, homodimer. Requires Mg(2+) as cofactor.

It catalyses the reaction orotidine 5'-phosphate + diphosphate = orotate + 5-phospho-alpha-D-ribose 1-diphosphate. It participates in pyrimidine metabolism; UMP biosynthesis via de novo pathway; UMP from orotate: step 1/2. Its function is as follows. Catalyzes the transfer of a ribosyl phosphate group from 5-phosphoribose 1-diphosphate to orotate, leading to the formation of orotidine monophosphate (OMP). The polypeptide is Orotate phosphoribosyltransferase (Pseudomonas putida (strain GB-1)).